Here is a 440-residue protein sequence, read N- to C-terminus: Proline--tRNA ligase (440 aa).

This sequence belongs to the class-II aminoacyl-tRNA synthetase family. ProS type 2 subfamily. In terms of assembly, homodimer.

The protein resides in the cytoplasm. The catalysed reaction is tRNA(Pro) + L-proline + ATP = L-prolyl-tRNA(Pro) + AMP + diphosphate. Catalyzes the attachment of proline to tRNA(Pro) in a two-step reaction: proline is first activated by ATP to form Pro-AMP and then transferred to the acceptor end of tRNA(Pro). The sequence is that of Proline--tRNA ligase from Rhizobium leguminosarum bv. trifolii (strain WSM2304).